The primary structure comprises 430 residues: Septin-14 (430 aa).

One can recognise a Septin-type G domain in the interval 48–313 (KGFSFNILCV…ECYRSNRLQK (266 aa)). A G1 motif region spans residues 58-65 (GETGIGKT). GTP is bound by residues 58–65 (GETGIGKT), Gly-113, 194–202 (KADSLSKND), Gly-246, and Arg-261. The segment at 110–113 (KTVG) is G3 motif. A G4 motif region spans residues 193–196 (AKAD). The stretch at 329–410 (QEMYEAKRRE…IIDFYKMKAA (82 aa)) forms a coiled coil. A required for interaction with SEPTIN4. Required for migration of cortical neurons during corticogenesis region spans residues 367–430 (DAEKELQDKF…NIKKDKDRKK (64 aa)).

Belongs to the TRAFAC class TrmE-Era-EngA-EngB-Septin-like GTPase superfamily. Septin GTPase family. In terms of assembly, septins polymerize into heterooligomeric protein complexes that form filaments, and can associate with cellular membranes, actin filaments and microtubules. GTPase activity is required for filament formation. Interacts with ACTN4. Interacts with SEPTIN9. Interacts (via C-terminus) with SEPTIN4. As to expression, expressed in the testis and brain including the cerebrum, hippocampus and cerebellum (at protein level).

Its subcellular location is the cytoplasm. It is found in the cytoskeleton. It localises to the cell projection. The protein localises to the axon. The protein resides in the dendrite. Its subcellular location is the perikaryon. It is found in the perinuclear region. It localises to the cytoplasmic vesicle. The protein localises to the secretory vesicle. The protein resides in the acrosome. Filament-forming cytoskeletal GTPase. Involved in the migration of cortical neurons and the formation of neuron leading processes during embryonic development. Plays a role in sperm head formation during spermiogenesis, potentially via facilitating localization of ACTN4 to cell filaments. This is Septin-14 from Mus musculus (Mouse).